The chain runs to 202 residues: Methylthioribulose-1-phosphate dehydratase (202 aa).

Zn(2+) is bound by residues H93 and H95.

It belongs to the aldolase class II family. MtnB subfamily. The cofactor is Zn(2+).

The catalysed reaction is 5-(methylsulfanyl)-D-ribulose 1-phosphate = 5-methylsulfanyl-2,3-dioxopentyl phosphate + H2O. Its pathway is amino-acid biosynthesis; L-methionine biosynthesis via salvage pathway; L-methionine from S-methyl-5-thio-alpha-D-ribose 1-phosphate: step 2/6. Its function is as follows. Catalyzes the dehydration of methylthioribulose-1-phosphate (MTRu-1-P) into 2,3-diketo-5-methylthiopentyl-1-phosphate (DK-MTP-1-P). The sequence is that of Methylthioribulose-1-phosphate dehydratase from Klebsiella pneumoniae subsp. pneumoniae (strain ATCC 700721 / MGH 78578).